Reading from the N-terminus, the 685-residue chain is DNA ligase (685 aa).

NAD(+) contacts are provided by residues 48–52 (DAEYD), 97–98 (SL), and E131. Residue K133 is the N6-AMP-lysine intermediate of the active site. Residues R154, E190, K304, and K328 each contribute to the NAD(+) site. Zn(2+) contacts are provided by C422, C425, C440, and C445. The BRCT domain occupies 603 to 685 (PEEGPLSGRR…RLLSGEERPG (83 aa)).

The protein belongs to the NAD-dependent DNA ligase family. LigA subfamily. Mg(2+) is required as a cofactor. It depends on Mn(2+) as a cofactor.

The enzyme catalyses NAD(+) + (deoxyribonucleotide)n-3'-hydroxyl + 5'-phospho-(deoxyribonucleotide)m = (deoxyribonucleotide)n+m + AMP + beta-nicotinamide D-nucleotide.. DNA ligase that catalyzes the formation of phosphodiester linkages between 5'-phosphoryl and 3'-hydroxyl groups in double-stranded DNA using NAD as a coenzyme and as the energy source for the reaction. It is essential for DNA replication and repair of damaged DNA. The protein is DNA ligase of Rubrobacter xylanophilus (strain DSM 9941 / JCM 11954 / NBRC 16129 / PRD-1).